We begin with the raw amino-acid sequence, 304 residues long: Insulin-like growth factor-binding protein 2 (304 aa).

The signal sequence occupies residues 1–34 (MLPRLGGPALPLLLPSLLLLLLLGAGGCGPGVRA). One can recognise an IGFBP N-terminal domain in the interval 36–118 (VLFRCPPCTP…VTGAGTCEKR (83 aa)). Cystine bridges form between Cys40/Cys68, Cys43/Cys70, Cys51/Cys71, Cys59/Cys74, Cys82/Cys95, Cys89/Cys115, Cys206/Cys240, Cys251/Cys262, and Cys264/Cys285. Residues 203 to 285 (RTPCQQELDQ…APTIRGDPEC (83 aa)) enclose the Thyroglobulin type-1 domain. A Cell attachment site motif is present at residues 280–282 (RGD).

Interacts with IGF1. Interacts with IGF2. Interacts (via RGD motif) with integrin alpha5/ITGA5; this interaction induces cell migration, adhesion or apoptosis according to the context. Interacts with PTPRB; this interaction leads to PTPRB dimerization and inactivation. Cleaved by MMP9 leading to release of free IGF2 from IGFBP2-IGF2 complex, which contributes to enhance the motility and the growth of astrocytes. In terms of processing, O-glycosylated. As to expression, in adults, expressed in brain, testes, ovaries, and kidney. Expression in the adult liver is barely detectable.

The protein localises to the secreted. Functionally, multifunctional protein that plays a critical role in regulating the availability of IGFs such as IGF1 and IGF2 to their receptors and thereby regulates IGF-mediated cellular processes including proliferation, differentiation, and apoptosis in a cell-type specific manner. Functions coordinately with receptor protein tyrosine phosphatase beta/PTPRB and the IGF1 receptor to regulate IGF1-mediated signaling by stimulating the phosphorylation of PTEN leading to its inactivation and AKT1 activation. Plays a positive role in cell migration via interaction with integrin alpha5/ITGA5 through an RGD motif. Additionally, interaction with ITGA5/ITGB1 enhances the adhesion of endothelial progenitor cells to endothelial cells. Upon mitochondrial damage, facilitates apoptosis with ITGA5 of podocytes, and then activates the phosphorylation of focal adhesion kinase (FAK)-mediated mitochondrial injury. The chain is Insulin-like growth factor-binding protein 2 (Igfbp2) from Rattus norvegicus (Rat).